Consider the following 198-residue polypeptide: Recombination protein RecR (198 aa).

The C4-type zinc-finger motif lies at cysteine 57 to cysteine 72. The Toprim domain occupies alanine 80–proline 175.

This sequence belongs to the RecR family.

May play a role in DNA repair. It seems to be involved in an RecBC-independent recombinational process of DNA repair. It may act with RecF and RecO. The polypeptide is Recombination protein RecR (Janthinobacterium sp. (strain Marseille) (Minibacterium massiliensis)).